A 128-amino-acid chain; its full sequence is Fluoride-specific ion channel FluC (128 aa).

The next 4 helical transmembrane spans lie at 7–29, 36–57, 65–94, and 98–126; these read LNFIAIGIGATLGAWLRWVLGLR, PWGTLTANLVGGYLIGVMVALI, AWIRLAAVTGFLGGLTTFSTFSAETVDMLE, and YATAAAYAGASLAGSLAMTGLGLATVRLL. Fluoride is bound at residue asparagine 43. Na(+)-binding residues include glycine 77 and threonine 80. Fluoride contacts are provided by tyrosine 104, serine 108, and serine 112.

Belongs to the fluoride channel Fluc/FEX (TC 1.A.43) family. Homodimer.

Its subcellular location is the cell inner membrane. The enzyme catalyses fluoride(in) = fluoride(out). Na(+) is not transported, but it plays an essential structural role and its presence is essential for fluoride channel function. The Na(+)-binding site is specific for Na(+) over most other cations including K(+) and Mg(2+). Fluoride efflux is inhibited by Li(2+). In terms of biological role, fluoride-specific ion channel. Important for reducing fluoride concentration in the cell, thus reducing its toxicity. Is highly specific for fluoride ions and cannot transport chloride ions. This is Fluoride-specific ion channel FluC from Bordetella pertussis (strain Tohama I / ATCC BAA-589 / NCTC 13251).